A 235-amino-acid chain; its full sequence is Sugar fermentation stimulation protein homolog (235 aa).

This sequence belongs to the SfsA family.

In Roseobacter denitrificans (strain ATCC 33942 / OCh 114) (Erythrobacter sp. (strain OCh 114)), this protein is Sugar fermentation stimulation protein homolog.